Reading from the N-terminus, the 663-residue chain is Chaperone protein HtpG (663 aa).

The interval 1 to 352 is a; substrate-binding; the sequence is MTKQTLSFQA…SADLPLNVSR (352 aa). A compositionally biased stretch (basic and acidic residues) spans 218–228; sequence ELINPSDEKGG. The disordered stretch occupies residues 218-237; it reads ELINPSDEKGGRQPGGMVKT. The segment at 353-595 is b; it reads ELLQESRDVK…DHGMSTQLAR (243 aa). Positions 596–663 are c; it reads MLKQAGQAAP…YVKRVNALLV (68 aa).

Belongs to the heat shock protein 90 family. In terms of assembly, homodimer.

It is found in the cytoplasm. Molecular chaperone. Has ATPase activity. The sequence is that of Chaperone protein HtpG from Albidiferax ferrireducens (strain ATCC BAA-621 / DSM 15236 / T118) (Rhodoferax ferrireducens).